The chain runs to 354 residues: Arginase-2, mitochondrial (354 aa).

A mitochondrion-targeting transit peptide spans 1–22 (MSYGSCVSRLLRTRVQSVLKKS). Mn(2+) is bound by residues His120, Asp143, His145, and Asp147. Substrate contacts are provided by residues 145–149 (HADIN), 156–158 (SGN), and Asp202. Asp251 and Asp253 together coordinate Mn(2+). Residues Thr265 and Glu296 each coordinate substrate. Residues 330 to 354 (GHTVYEQLPPPSSPHESENAERVRI) are disordered. Basic and acidic residues predominate over residues 344-354 (HESENAERVRI).

This sequence belongs to the arginase family. In terms of assembly, homotrimer. Mn(2+) is required as a cofactor.

It is found in the mitochondrion. It carries out the reaction L-arginine + H2O = urea + L-ornithine. It functions in the pathway nitrogen metabolism; urea cycle; L-ornithine and urea from L-arginine: step 1/1. Functionally, may play a role in the regulation of extra-urea cycle arginine metabolism and also in down-regulation of nitric oxide synthesis. Extrahepatic arginase functions to regulate L-arginine bioavailability to nitric oxid synthase (NOS). Arginine metabolism is a critical regulator of innate and adaptive immune responses. Seems to be involved in negative regulation of the survival capacity of activated T cells. May suppress inflammation-related signaling in asthmatic airway epithelium. May play a role in promoting prenatal immune suppression. Regulates RPS6KB1 signaling, which promotes endothelial cell senescence and inflammation and implicates NOS3/eNOS dysfunction. Can inhibit endothelial autophagy independently of its enzymatic activity implicating mTORC2 signaling. Involved in vascular smooth muscle cell senescence and apoptosis independently of its enzymatic activity. The polypeptide is Arginase-2, mitochondrial (ARG2) (Oryctolagus cuniculus (Rabbit)).